The primary structure comprises 332 residues: Aquaporin Lacbi1:317173 (332 aa).

The span at Met-1–Ser-20 shows a compositional bias: polar residues. The interval Met-1–Arg-45 is disordered. Topologically, residues Met-1 to Glu-66 are cytoplasmic. A helical membrane pass occupies residues Phe-67 to Ser-87. At Thr-88 to Phe-100 the chain is on the extracellular side. The helical transmembrane segment at Leu-101–Ile-121 threads the bilayer. Topologically, residues Ser-122–Lys-144 are cytoplasmic. Residues Asn-127–Ala-129 carry the NPA 1 motif. Residues Val-145–Ala-165 traverse the membrane as a helical segment. The Extracellular segment spans residues Asn-166–Gln-199. A helical transmembrane segment spans residues Ala-200 to Leu-220. Topologically, residues Thr-221–Asn-230 are cytoplasmic. The helical transmembrane segment at Gly-231–Glu-251 threads the bilayer. Over Thr-252–Gln-283 the chain is Extracellular. An NPA 2 motif is present at residues Asn-257–Ala-259. The helical transmembrane segment at Tyr-284–Tyr-304 threads the bilayer. Topologically, residues Asp-305–Val-332 are cytoplasmic.

This sequence belongs to the MIP/aquaporin (TC 1.A.8) family.

The protein localises to the membrane. The catalysed reaction is H2O(in) = H2O(out). The enzyme catalyses NH4(+)(in) = NH4(+)(out). Functionally, water channel required to facilitate the transport of water across membranes. Acts as the most efficient Laccaria water channel. In addition to water, also shows strong ammonium transport activity. May be involved in fungal nitrogen (ammonium) support of the plant host in symbiosis. This is Aquaporin Lacbi1:317173 from Laccaria bicolor (strain S238N-H82 / ATCC MYA-4686) (Bicoloured deceiver).